A 323-amino-acid polypeptide reads, in one-letter code: tRNA (guanine(9)-N1)-methyltransferase (323 aa).

The segment covering 1 to 16 (MTEQTSEATVVNNSPA) has biased composition (polar residues). Disordered regions lie at residues 1–34 (MTEQ…EIEE) and 192–215 (TGAP…NSTD). Basic and acidic residues predominate over residues 25–34 (EKPTPEEIEE). The region spanning 99–319 (KAQPIPSRQI…KVLPPRKIKS (221 aa)) is the SAM-dependent MTase TRM10-type domain. Residues 204–215 (GNSNSNTTNSTD) show a composition bias toward low complexity. S-adenosyl-L-methionine contacts are provided by residues 225-226 (LT), glycine 245, 249-253 (DKNRH), cysteine 257, leucine 271, and 283-285 (HVL). Catalysis depends on aspartate 249, which acts as the Proton acceptor.

Belongs to the class IV-like SAM-binding methyltransferase superfamily. TRM10 family. In terms of assembly, monomer.

It localises to the cytoplasm. Its subcellular location is the nucleus. The enzyme catalyses guanosine(9) in tRNA + S-adenosyl-L-methionine = N(1)-methylguanosine(9) in tRNA + S-adenosyl-L-homocysteine + H(+). S-adenosyl-L-methionine-dependent guanine N(1)-methyltransferase that catalyzes the formation of N(1)-methylguanine at position 9 (m1G9) in cytoplasmic tRNA. This is tRNA (guanine(9)-N1)-methyltransferase from Candida albicans (strain SC5314 / ATCC MYA-2876) (Yeast).